The chain runs to 468 residues: 3-isopropylmalate dehydratase large subunit (468 aa).

Positions 346, 406, and 409 each coordinate [4Fe-4S] cluster.

The protein belongs to the aconitase/IPM isomerase family. LeuC type 1 subfamily. Heterodimer of LeuC and LeuD. The cofactor is [4Fe-4S] cluster.

It catalyses the reaction (2R,3S)-3-isopropylmalate = (2S)-2-isopropylmalate. It functions in the pathway amino-acid biosynthesis; L-leucine biosynthesis; L-leucine from 3-methyl-2-oxobutanoate: step 2/4. In terms of biological role, catalyzes the isomerization between 2-isopropylmalate and 3-isopropylmalate, via the formation of 2-isopropylmaleate. The protein is 3-isopropylmalate dehydratase large subunit of Pseudoalteromonas atlantica (strain T6c / ATCC BAA-1087).